The primary structure comprises 420 residues: LanC-like protein 3 homolog (420 aa).

It belongs to the LanC-like protein family.

The chain is LanC-like protein 3 homolog from Drosophila pseudoobscura pseudoobscura (Fruit fly).